The sequence spans 165 residues: Nucleotide-binding protein P9211_04811 (165 aa).

Belongs to the YajQ family.

In terms of biological role, nucleotide-binding protein. This Prochlorococcus marinus (strain MIT 9211) protein is Nucleotide-binding protein P9211_04811.